A 350-amino-acid chain; its full sequence is Meiotic driver wtf30 (350 aa).

The segment at 1–92 is disordered; it reads MKNKYYPLRS…RENHSSGTTD (92 aa). The span at 11-29 shows a compositional bias: basic and acidic residues; it reads SIDELSTKNDNEIDLEKGP. A compositionally biased stretch (polar residues) spans 57 to 72; sequence GANNPNLFNTDESTTP. 7 helical membrane-spanning segments follow: residues 97-117, 134-154, 165-185, 190-210, 226-246, 253-273, and 280-300; these read FLIK…PAVC, WVYF…LWCF, CVKV…IGLF, EMMI…FVYI, CTIS…FWTF, LAKV…TMFL, and WTGC…LFLC.

Belongs to the WTF family. Homomer. Forms protein aggregates. The two isoforms can interact with each other and with themselves. High sequence similarity is required for their interaction.

Its subcellular location is the spore membrane. The protein resides in the vacuole membrane. The protein localises to the ascus epiplasm. It is found in the cytoplasm. It localises to the endoplasmic reticulum membrane. Promotes unequal transmission of alleles from the parental zygote to progeny spores by acting as poison/antidote system where the poison and antidote proteins are produced from the same locus; the poison component is trans-acting and targets all spores within an ascus whereas the antidote component is spore-specific, leading to poisoning of all progeny that do not inherit the allele. In terms of biological role, localizes isoform 2 to the vacuole thereby facilitating its degradation. Functionally, forms toxic aggregates that disrupt spore maturation. This is Meiotic driver wtf30 from Schizosaccharomyces kambucha (Fission yeast).